A 180-amino-acid chain; its full sequence is Large ribosomal subunit protein uL6 (180 aa).

It belongs to the universal ribosomal protein uL6 family. Part of the 50S ribosomal subunit.

Its function is as follows. This protein binds to the 23S rRNA, and is important in its secondary structure. It is located near the subunit interface in the base of the L7/L12 stalk, and near the tRNA binding site of the peptidyltransferase center. This chain is Large ribosomal subunit protein uL6, found in Anaeromyxobacter dehalogenans (strain 2CP-C).